The sequence spans 215 residues: Cytochrome b6 (215 aa).

Residues 32–52 (IFYCFGGITLTCFLIQVATGF) traverse the membrane as a helical segment. Position 35 (cysteine 35) interacts with heme c. Positions 86 and 100 each coordinate heme b. 3 consecutive transmembrane segments (helical) span residues 90–110 (ASMMVMMLILHVFRVYLTGGF), 116–136 (LTWVTGVILAVITVSFGVTGY), and 186–206 (LHTFVLPLLTAVFMLMHFLMI). Histidine 187 and histidine 202 together coordinate heme b.

It belongs to the cytochrome b family. PetB subfamily. As to quaternary structure, the 4 large subunits of the cytochrome b6-f complex are cytochrome b6, subunit IV (17 kDa polypeptide, PetD), cytochrome f and the Rieske protein, while the 4 small subunits are PetG, PetL, PetM and PetN. The complex functions as a dimer. It depends on heme b as a cofactor. Heme c serves as cofactor.

The protein localises to the plastid. It localises to the chloroplast thylakoid membrane. Its function is as follows. Component of the cytochrome b6-f complex, which mediates electron transfer between photosystem II (PSII) and photosystem I (PSI), cyclic electron flow around PSI, and state transitions. This Nephroselmis olivacea (Green alga) protein is Cytochrome b6.